A 485-amino-acid polypeptide reads, in one-letter code: Glutamate--tRNA ligase (485 aa).

The 'HIGH' region signature appears at 11-21; that stretch reads PSPTGYMHVGN. Zn(2+)-binding residues include Cys108, Cys110, Cys135, and Asp137. The short motif at 252-256 is the 'KMSKS' region element; sequence KLSKR. Residue Lys255 participates in ATP binding.

The protein belongs to the class-I aminoacyl-tRNA synthetase family. Glutamate--tRNA ligase type 1 subfamily. As to quaternary structure, monomer. Zn(2+) is required as a cofactor.

The protein resides in the cytoplasm. The catalysed reaction is tRNA(Glu) + L-glutamate + ATP = L-glutamyl-tRNA(Glu) + AMP + diphosphate. Functionally, catalyzes the attachment of glutamate to tRNA(Glu) in a two-step reaction: glutamate is first activated by ATP to form Glu-AMP and then transferred to the acceptor end of tRNA(Glu). This Clostridium botulinum (strain Loch Maree / Type A3) protein is Glutamate--tRNA ligase.